Here is a 251-residue protein sequence, read N- to C-terminus: Hydroxyacylglutathione hydrolase (251 aa).

Zn(2+) is bound by residues H53, H55, D57, H58, H110, D127, and H165.

The protein belongs to the metallo-beta-lactamase superfamily. Glyoxalase II family. Monomer. Zn(2+) serves as cofactor.

The catalysed reaction is an S-(2-hydroxyacyl)glutathione + H2O = a 2-hydroxy carboxylate + glutathione + H(+). The protein operates within secondary metabolite metabolism; methylglyoxal degradation; (R)-lactate from methylglyoxal: step 2/2. Thiolesterase that catalyzes the hydrolysis of S-D-lactoyl-glutathione to form glutathione and D-lactic acid. The protein is Hydroxyacylglutathione hydrolase of Escherichia coli O17:K52:H18 (strain UMN026 / ExPEC).